A 142-amino-acid polypeptide reads, in one-letter code: Galactose-6-phosphate isomerase subunit LacA (142 aa).

This sequence belongs to the LacAB/RpiB family. Heteromultimeric protein consisting of LacA and LacB.

The enzyme catalyses aldehydo-D-galactose 6-phosphate = keto-D-tagatose 6-phosphate. The protein operates within carbohydrate metabolism; D-galactose 6-phosphate degradation; D-tagatose 6-phosphate from D-galactose 6-phosphate: step 1/1. This chain is Galactose-6-phosphate isomerase subunit LacA, found in Enterococcus faecalis (strain ATCC 700802 / V583).